A 268-amino-acid chain; its full sequence is Tetraspanin-5 (268 aa).

At 1 to 17 (MSGKHYKGPEVSCCIKY) the chain is on the cytoplasmic side. A helical membrane pass occupies residues 18-38 (FIFGFNVIFWFLGITFLGIGL). The Extracellular segment spans residues 39–61 (WAWNEKGVLSNISSITDLGGFDP). N49 carries an N-linked (GlcNAc...) asparagine glycan. The chain crosses the membrane as a helical span at residues 62–82 (VWLFLVVGGVMFILGFAGCIG). The Cytoplasmic segment spans residues 83–92 (ALRENTFLLK). Residues 93 to 113 (FFSVFLGIIFFLELTAGVLAF) form a helical membrane-spanning segment. The Extracellular segment spans residues 114–232 (VFKDWIKDQL…PQFEKWLQDN (119 aa)). Intrachain disulfides connect C153/C221, C154/C186, C170/C180, and C187/C200. 2 N-linked (GlcNAc...) asparagine glycosylation sites follow: N169 and N174. A glycan (N-linked (GlcNAc...) asparagine) is linked at N232. The helical transmembrane segment at 233 to 253 (LTIVAGIFIGIALLQIFGICL) threads the bilayer. Topologically, residues 254-268 (AQNLVSDIEAVRASW) are cytoplasmic.

The protein belongs to the tetraspanin (TM4SF) family. In terms of assembly, interacts with ADAM10; the interaction influences ADAM10 substrate specificity, endocytosis and turnover. Palmitoylated.

The protein resides in the cell membrane. Functionally, part of TspanC8 subgroup, composed of 6 members that interact with the transmembrane metalloprotease ADAM10. This interaction is required for ADAM10 exit from the endoplasmic reticulum and for enzymatic maturation and trafficking to the cell surface as well as substrate specificity. Different TspanC8/ADAM10 complexes have distinct substrates. Promotes ADAM10-mediated cleavage of CD44. Seems to regulate VE-cadherin expression in endothelial cells probably through interaction with ADAM10, promoting leukocyte transmigration. This chain is Tetraspanin-5, found in Homo sapiens (Human).